The following is a 191-amino-acid chain: Guanylate kinase (191 aa).

The region spanning 10 to 188 is the Guanylate kinase-like domain; the sequence is GQLIVLTGPS…ALHRLVKLIG (179 aa). 17-24 is a binding site for ATP; sequence GPSGVGKG.

Belongs to the guanylate kinase family.

The protein localises to the cytoplasm. The enzyme catalyses GMP + ATP = GDP + ADP. Its function is as follows. Essential for recycling GMP and indirectly, cGMP. This Synechocystis sp. (strain ATCC 27184 / PCC 6803 / Kazusa) protein is Guanylate kinase (gmk).